We begin with the raw amino-acid sequence, 466 residues long: Ribulose bisphosphate carboxylase large chain (466 aa).

N6,N6,N6-trimethyllysine is present on Lys-5. 2 residues coordinate substrate: Asn-114 and Thr-164. Catalysis depends on Lys-166, which acts as the Proton acceptor. Lys-168 serves as a coordination point for substrate. Mg(2+) contacts are provided by Lys-192, Asp-194, and Glu-195. Residue Lys-192 is modified to N6-carboxylysine. Residue His-285 is the Proton acceptor of the active site. Arg-286, His-318, and Ser-370 together coordinate substrate.

Belongs to the RuBisCO large chain family. Type I subfamily. Heterohexadecamer of 8 large chains and 8 small chains; disulfide-linked. The disulfide link is formed within the large subunit homodimers. The cofactor is Mg(2+). Post-translationally, the disulfide bond which can form in the large chain dimeric partners within the hexadecamer appears to be associated with oxidative stress and protein turnover.

It localises to the plastid. Its subcellular location is the chloroplast. The enzyme catalyses 2 (2R)-3-phosphoglycerate + 2 H(+) = D-ribulose 1,5-bisphosphate + CO2 + H2O. It catalyses the reaction D-ribulose 1,5-bisphosphate + O2 = 2-phosphoglycolate + (2R)-3-phosphoglycerate + 2 H(+). In terms of biological role, ruBisCO catalyzes two reactions: the carboxylation of D-ribulose 1,5-bisphosphate, the primary event in carbon dioxide fixation, as well as the oxidative fragmentation of the pentose substrate in the photorespiration process. Both reactions occur simultaneously and in competition at the same active site. This chain is Ribulose bisphosphate carboxylase large chain, found in Aesculus pavia (Red buckeye).